The sequence spans 253 residues: Large ribosomal subunit protein uL4 (253 aa).

The disordered stretch occupies residues 61–107 (GWGSGRGTSHVPRLVNSSRAARVPHARGGRRAHPPKPEADRSEKVNT). The span at 82–94 (RVPHARGGRRAHP) shows a compositional bias: basic residues. The segment covering 95 to 107 (PKPEADRSEKVNT) has biased composition (basic and acidic residues).

It belongs to the universal ribosomal protein uL4 family. As to quaternary structure, part of the 50S ribosomal subunit.

One of the primary rRNA binding proteins, this protein initially binds near the 5'-end of the 23S rRNA. It is important during the early stages of 50S assembly. It makes multiple contacts with different domains of the 23S rRNA in the assembled 50S subunit and ribosome. Its function is as follows. Forms part of the polypeptide exit tunnel. This chain is Large ribosomal subunit protein uL4, found in Methanosarcina barkeri (strain Fusaro / DSM 804).